A 60-amino-acid chain; its full sequence is Large ribosomal subunit protein bL32 (60 aa).

Basic residues predominate over residues 1 to 16 (MAVPKRKTTPSKRGMR). The disordered stretch occupies residues 1–60 (MAVPKRKTTPSKRGMRRSADALKQPAYVENPDSGELHRPHHVDLKSGMYRGKQILKPKGE). The segment covering 34–44 (GELHRPHHVDL) has biased composition (basic and acidic residues).

This sequence belongs to the bacterial ribosomal protein bL32 family.

The chain is Large ribosomal subunit protein bL32 from Parvibaculum lavamentivorans (strain DS-1 / DSM 13023 / NCIMB 13966).